We begin with the raw amino-acid sequence, 434 residues long: MAQFYSAKRRVTTRQIITVTVNDLDPFGQGVARHQGKALFVSGVLPHEQAEVVLVEDKKQYARAEVKRRLTDSPQRQAPRCPHFGVCGGCQQQHASVPLQQQSKRAALGRLMKREVDDVIAGAPWGYRRRARLSLNYQPKTQQLQMGFRQANAKAIVDVVQCPVLVPQLEALLPAVRECLSALSALRHLGHVELVQADNGPLMVLRHTAALPATDREKLERFSQTHGLSLYLAPQSEILEHIHGEAPWYTSDGLRLVFSPRDFIQVNDGVNQQMVRTALEWLDLRPEDRVLDLFCGMGNFTLPLATRAAHVVGVEGVPALVEKGRENAARNGLSNVTFFHENLEEDVTRQAWAKHGFDKVLLDPARAGAPGVMPHIIKLAPRRVVYVSCNPATLARDSETLLQAGYQIQRLAMLDMFPHTGHLESMVLFERRLT.

Residues 10-68 (RVTTRQIITVTVNDLDPFGQGVARHQGKALFVSGVLPHEQAEVVLVEDKKQYARAEVKR) enclose the TRAM domain. Positions 81, 87, 90, and 162 each coordinate [4Fe-4S] cluster. Residues Gln-265, Phe-294, Asn-299, Glu-315, Asn-342, and Asp-363 each contribute to the S-adenosyl-L-methionine site. The Nucleophile role is filled by Cys-389.

It belongs to the class I-like SAM-binding methyltransferase superfamily. RNA M5U methyltransferase family. RlmD subfamily.

The catalysed reaction is uridine(1939) in 23S rRNA + S-adenosyl-L-methionine = 5-methyluridine(1939) in 23S rRNA + S-adenosyl-L-homocysteine + H(+). In terms of biological role, catalyzes the formation of 5-methyl-uridine at position 1939 (m5U1939) in 23S rRNA. The chain is 23S rRNA (uracil(1939)-C(5))-methyltransferase RlmD from Klebsiella pneumoniae subsp. pneumoniae (strain ATCC 700721 / MGH 78578).